Reading from the N-terminus, the 946-residue chain is Isoleucine--tRNA ligase (946 aa).

The 'HIGH' region signature appears at 58 to 68 (PYANGSIHIGH). An L-isoleucyl-5'-AMP-binding site is contributed by Glu-568. The 'KMSKS' region motif lies at 609–613 (KMSKS). Lys-612 contributes to the ATP binding site. Zn(2+) is bound by residues Cys-908, Cys-911, Cys-928, and Cys-931.

It belongs to the class-I aminoacyl-tRNA synthetase family. IleS type 1 subfamily. As to quaternary structure, monomer. The cofactor is Zn(2+).

It localises to the cytoplasm. It carries out the reaction tRNA(Ile) + L-isoleucine + ATP = L-isoleucyl-tRNA(Ile) + AMP + diphosphate. Catalyzes the attachment of isoleucine to tRNA(Ile). As IleRS can inadvertently accommodate and process structurally similar amino acids such as valine, to avoid such errors it has two additional distinct tRNA(Ile)-dependent editing activities. One activity is designated as 'pretransfer' editing and involves the hydrolysis of activated Val-AMP. The other activity is designated 'posttransfer' editing and involves deacylation of mischarged Val-tRNA(Ile). This Chromohalobacter salexigens (strain ATCC BAA-138 / DSM 3043 / CIP 106854 / NCIMB 13768 / 1H11) protein is Isoleucine--tRNA ligase.